We begin with the raw amino-acid sequence, 118 residues long: Small ribosomal subunit protein uS13 (118 aa).

The tract at residues 94–118 is disordered; the sequence is GLPVRGQRTKTNARTRKGPCKPIKK.

This sequence belongs to the universal ribosomal protein uS13 family. Part of the 30S ribosomal subunit. Forms a loose heterodimer with protein S19. Forms two bridges to the 50S subunit in the 70S ribosome.

Its function is as follows. Located at the top of the head of the 30S subunit, it contacts several helices of the 16S rRNA. In the 70S ribosome it contacts the 23S rRNA (bridge B1a) and protein L5 of the 50S subunit (bridge B1b), connecting the 2 subunits; these bridges are implicated in subunit movement. Contacts the tRNAs in the A and P-sites. In Salmonella typhi, this protein is Small ribosomal subunit protein uS13.